Consider the following 472-residue polypeptide: Mitochondrial substrate carrier family protein C (472 aa).

At 1-189 (MVLNENDKEF…ASSLRNTITY (189 aa)) the chain is on the mitochondrial intermembrane side. EF-hand domains lie at 6–41 (NDKE…LRIP), 42–70 (SSEK…FEDF), 73–108 (ENIK…LNIP), and 110–145 (YSEQ…LPNS). Ca(2+)-binding residues include Asp-19, Asp-21, Asn-23, Lys-25, Glu-30, Asp-55, Asp-57, Asp-59, Ser-61, Glu-66, Asp-86, Asn-88, Ser-90, Thr-92, Glu-97, Asp-123, Asn-125, Asp-127, Gln-129, and Glu-134. 3 Solcar repeats span residues 184–268 (RNTI…VKKL), 276–362 (LTSA…LKHK), and 375–461 (GQLL…FKKA). A helical transmembrane segment spans residues 190–207 (MLAGSVAGFASRTSTAPL). The Mitochondrial matrix segment spans residues 208 to 242 (ERVKIMCQLNHGKPISLISAFKACYKDGGIKGFFR). Residues 243-263 (GNLANIIKVSPESAVKFGTYE) traverse the membrane as a helical segment. At 264–281 (YVKKLFAENDCELTSAQR) the chain is on the mitochondrial intermembrane side. A helical membrane pass occupies residues 282–302 (FISGSVAGVVSHTTLFPLEVV). Residues 303–330 (RLRLSAEIAGTYNGIFDCFKKIAISEKS) lie on the Mitochondrial matrix side of the membrane. A helical membrane pass occupies residues 331 to 351 (IRPFYRGLGASITATIPHSGV). At 352 to 377 (NMMVYEFLKHKVIKMTGNEFPTAGQL) the chain is on the mitochondrial intermembrane side. A helical membrane pass occupies residues 378–398 (LVCASTSSVCGQLVGYPFHVV). The Mitochondrial matrix segment spans residues 399-441 (KSRLITQGSSVNQEKYTGLFDGLTKIIKKEGPIGLYKGIVPSF). The helical transmembrane segment at 442–462 (MKSIPSHSITFIVYEGFKKAF) threads the bilayer. The Mitochondrial intermembrane portion of the chain corresponds to 463–472 (DVNLKEKKHH).

This sequence belongs to the mitochondrial carrier (TC 2.A.29) family.

It localises to the mitochondrion inner membrane. Calcium-dependent mitochondrial solute carrier. Mitochondrial solute carriers shuttle metabolites, nucleotides, and cofactors through the mitochondrial inner membrane. This is Mitochondrial substrate carrier family protein C (mcfC) from Dictyostelium discoideum (Social amoeba).